Here is a 316-residue protein sequence, read N- to C-terminus: Ribosomal RNA small subunit methyltransferase H (316 aa).

Residues 39–41 (GGH), Asp-56, Phe-82, Asp-103, and Gln-110 contribute to the S-adenosyl-L-methionine site.

Belongs to the methyltransferase superfamily. RsmH family.

Its subcellular location is the cytoplasm. The enzyme catalyses cytidine(1402) in 16S rRNA + S-adenosyl-L-methionine = N(4)-methylcytidine(1402) in 16S rRNA + S-adenosyl-L-homocysteine + H(+). In terms of biological role, specifically methylates the N4 position of cytidine in position 1402 (C1402) of 16S rRNA. The chain is Ribosomal RNA small subunit methyltransferase H from Methylacidiphilum infernorum (isolate V4) (Methylokorus infernorum (strain V4)).